Here is a 398-residue protein sequence, read N- to C-terminus: 2,3,4,5-tetrahydropyridine-2,6-dicarboxylate N-succinyltransferase (398 aa).

The active-site Acyl-anhydride intermediate is the Glu268. Succinyl-CoA-binding positions include Arg270, Gly285, Ser288, Ala311, 326-327 (DG), Gly334, Lys361, and 374-377 (RQNS).

The protein belongs to the type 2 tetrahydrodipicolinate N-succinyltransferase family. As to quaternary structure, homotrimer.

It localises to the cytoplasm. It carries out the reaction (S)-2,3,4,5-tetrahydrodipicolinate + succinyl-CoA + H2O = (S)-2-succinylamino-6-oxoheptanedioate + CoA. It functions in the pathway amino-acid biosynthesis; L-lysine biosynthesis via DAP pathway; LL-2,6-diaminopimelate from (S)-tetrahydrodipicolinate (succinylase route): step 1/3. Its function is as follows. Catalyzes the conversion of the cyclic tetrahydrodipicolinate (THDP) into the acyclic N-succinyl-L-2-amino-6-oxopimelate using succinyl-CoA. The sequence is that of 2,3,4,5-tetrahydropyridine-2,6-dicarboxylate N-succinyltransferase from Sulfurimonas denitrificans (strain ATCC 33889 / DSM 1251) (Thiomicrospira denitrificans (strain ATCC 33889 / DSM 1251)).